The chain runs to 695 residues: Calcium-dependent serine proteinase (695 aa).

An N-terminal signal peptide occupies residues 1–21 (MGKSSEAWCIVLFSVFASFSA). The CUB 1 domain occupies 22-136 (EPTMHGEILS…TGFAAYYAAI (115 aa)). Intrachain disulfides connect C71/C89, C141/C153, C149/C162, and C164/C177. Positions 137–178 (DVNECTDFTDVPCSHFCNNFIGGYFCSCPPEYFLHDDMRNCG) constitute an EGF-like; calcium-binding domain. N155 is subject to (3R)-3-hydroxyasparagine. Residue N180 is glycosylated (N-linked (GlcNAc...) asparagine). Cystine bridges form between C181/C208, C240/C257, C300/C347, C327/C360, C365/C410, and C392/C428. The CUB 2 domain maps to 181–296 (CSGNVFTALI…KGWKLRYHGD (116 aa)). 2 Sushi domains span residues 298–362 (IPCP…RCQP) and 363–430 (VDCG…KCVP). The N-linked (GlcNAc...) asparagine glycan is linked to N413. In terms of domain architecture, Peptidase S1 spans 445-687 (IFGGFPAKIQ…YKDWILQTMQ (243 aa)). Active-site charge relay system residues include H482 and D536. 2 disulfides stabilise this stretch: C602–C625 and C634–C666. The active-site Charge relay system is the S638.

Belongs to the peptidase S1 family. Heterodimer, consisting of heavy and light chains with disulfide bonds. The heavy chain is expected to be a regulatory subunit and the light chain contains the catalytic site. Post-translationally, the iron and 2-oxoglutarate dependent 3-hydroxylation of aspartate and asparagine is (R) stereospecific within EGF domains.

The protein localises to the secreted. The protein resides in the extracellular space. It is found in the extracellular matrix. Capable of degrading extracellular matrix proteins. CASP degrades type I and IV collagen and fibronectin in the presence of calcium. The protein is Calcium-dependent serine proteinase of Mesocricetus auratus (Golden hamster).